A 443-amino-acid polypeptide reads, in one-letter code: Xaa-Pro dipeptidase (443 aa).

The Mn(2+) site is built by D246, D257, H339, E384, and E423.

It belongs to the peptidase M24B family. Bacterial-type prolidase subfamily. The cofactor is Mn(2+).

The catalysed reaction is Xaa-L-Pro dipeptide + H2O = an L-alpha-amino acid + L-proline. Functionally, splits dipeptides with a prolyl residue in the C-terminal position. The chain is Xaa-Pro dipeptidase from Klebsiella pneumoniae subsp. pneumoniae (strain ATCC 700721 / MGH 78578).